The primary structure comprises 341 residues: NADH-quinone oxidoreductase subunit H 2 (341 aa).

A run of 8 helical transmembrane segments spans residues 13–33 (IIVI…IAYI), 82–102 (GVFL…WAVI), 115–135 (VGVL…IMAG), 161–181 (IGFV…TAIV), 190–210 (MLGW…VSAL), 248–268 (YVAI…GWLP), 277–297 (WVPG…LFAM), and 317–337 (VFLP…QFAG).

The protein belongs to the complex I subunit 1 family. In terms of assembly, NDH-1 is composed of 14 different subunits. Subunits NuoA, H, J, K, L, M, N constitute the membrane sector of the complex.

It localises to the cell inner membrane. It catalyses the reaction a quinone + NADH + 5 H(+)(in) = a quinol + NAD(+) + 4 H(+)(out). In terms of biological role, NDH-1 shuttles electrons from NADH, via FMN and iron-sulfur (Fe-S) centers, to quinones in the respiratory chain. The immediate electron acceptor for the enzyme in this species is believed to be ubiquinone. Couples the redox reaction to proton translocation (for every two electrons transferred, four hydrogen ions are translocated across the cytoplasmic membrane), and thus conserves the redox energy in a proton gradient. This subunit may bind ubiquinone. The sequence is that of NADH-quinone oxidoreductase subunit H 2 from Rhodopseudomonas palustris (strain BisB5).